Reading from the N-terminus, the 211-residue chain is Endo-1,4-beta-xylanase 5 (211 aa).

The first 16 residues, 1 to 16 (MKVTAAFASLLLTAFA), serve as a signal peptide directing secretion. The 192-residue stretch at 19–210 (APEPVLVSRS…GVGSASVTIS (192 aa)) folds into the GH11 domain. The Nucleophile role is filled by Glu106. Catalysis depends on Glu197, which acts as the Proton donor.

Belongs to the glycosyl hydrolase 11 (cellulase G) family.

Its subcellular location is the secreted. The enzyme catalyses Endohydrolysis of (1-&gt;4)-beta-D-xylosidic linkages in xylans.. It participates in glycan degradation; xylan degradation. In terms of biological role, endo-1,4-beta-xylanase involved in the hydrolysis of xylan, a major structural heterogeneous polysaccharide found in plant biomass representing the second most abundant polysaccharide in the biosphere, after cellulose. This chain is Endo-1,4-beta-xylanase 5 (XYN5), found in Aspergillus niger.